Reading from the N-terminus, the 120-residue chain is Large ribosomal subunit protein uL18 (120 aa).

This sequence belongs to the universal ribosomal protein uL18 family. Part of the 50S ribosomal subunit; part of the 5S rRNA/L5/L18/L25 subcomplex. Contacts the 5S and 23S rRNAs.

Its function is as follows. This is one of the proteins that bind and probably mediate the attachment of the 5S RNA into the large ribosomal subunit, where it forms part of the central protuberance. In Rhodopseudomonas palustris (strain HaA2), this protein is Large ribosomal subunit protein uL18.